The following is a 1249-amino-acid chain: MDAKARNCLLQHKEALEKDIKTSYIMDHMISNGVLTVVEEEKVKSQATQYQRAAALIKMILNKDNYAYISFYNALLHEGYKDLAGLLHSGLPLVSSSSGKDTDGGNTSFVRTVLCEGGVPQRPVIFVTRKKLVSAIQQKLWKLNGEPGWVTIYGMAGCGKSVLAAEAVRDHALLEGCFSGGVHWVSIGKQDKSGLLMKLQNLCTRLGQEESFSQRLPLNIEEAKDRLRVLMLRKHPRSLLILDDVWDPWVLKAFDNQCQILLTTRDKSVTDSVMGPKYVIPVESGLGKEKGLEILSLFVNMKKEDLPVEAHSIIKECKGSPLVVSLVGALLRDFPNRWAYYLRQLQNKQFKRIRKSSSYDYEALDEAMSISVEMLREDIKDYYTDLSILQKDVKVPTKVLCVLWDLETEEVEDILQEFVNKSLLFCNRNGKSFCYYLHDLQVDFLTEKNRSQLQDLHRKMVTQFQRYHQPHTLSPGQEDCMYWYNFLAYHMASAGMHKELCALMFSLDWIKAKTELVGPAHLIHEFVEYRHILDEKDCAVCENFQEFLSLNGHLLGRQPFPNIVQLGLCEPETSEVYQQAKLQAKQEVDTGRLYLEWINKKTIKNLSRLVVRPHTDAVYHACFSQDGQRIASCGADKTLQVFKAETGEKLLDIKAHEDEVLCCAFSSDDSYIATCSVDKKVKIWDSGTGKLVHTYEEHSEQVNCCHFTNKSNHLLLATGSNDSFLKLWDLNQKECRNTMFGHTNSVTHCRFSPDDELLASCSADGTLKLWDVRSANEKKSINVKRFFLSSEDPPEDVEVIVKCCSWSADGDRIIVAAKNKVLLLDIHTSGLLTEIHTGHHSTIQYCDFSPYDHLAVIALSQYCVELWNIDSRVKVADCRGHLSWVHGVMFSPDGSSFLTASDDQTIRVWETRKVCKNSAIVLKQEIDVVFQENEMMVLAVDNIRGLQLIAGKTGQIDYLPEAQVSCCCLSPHLEYVAFGDEEGAIKIIELPNNRVFSSGIGHKKAVRHIQFTADGKTLISSSEDSVIQVWNWQTEEYVFLQAHQETVKDFRLLRDSRLLSWSFDGTVKVWNVITGRIERDFTCHQGTVLSCAISSDATKFSSTSADKTAKIWSFELPSPLHELKGHNSCVRCSAFSLDGILLATGDDNGEIRIWNVSDGQLLHLCAPISIEEGTATHGGWVTDVCFSPDRKMLVSAGGYLKWWNVVTGESSQTFYTNGTNLKKIHVSPDFRTYVTVDNLGILYILQVLE.

One can recognise a CARD domain in the interval 1-90 (MDAKARNCLL…KDLAGLLHSG (90 aa)). Residues 106–415 (NTSFVRTVLC…LETEEVEDIL (310 aa)) enclose the NB-ARC domain. Residues 154 to 161 (GMAGCGKS) and Arg265 contribute to the ATP site. A WD 1-1 repeat occupies 613–652 (PHTDAVYHACFSQDGQRIASCGADKTLQVFKAETGEKLLD). One copy of the WD 1-2 repeat lies at 655 to 694 (AHEDEVLCCAFSSDDSYIATCSVDKKVKIWDSGTGKLVHT). A WD 1-3 repeat occupies 697–738 (EHSEQVNCCHFTNKSNHLLLATGSNDSFLKLWDLNQKECRNT). One copy of the WD 1-4 repeat lies at 741–780 (GHTNSVTHCRFSPDDELLASCSADGTLKLWDVRSANEKKS). A WD 1-5 repeat occupies 796–837 (DVEVIVKCCSWSADGDRIIVAAKNKVLLLDIHTSGLLTEIHT). Residues 838 to 877 (GHHSTIQYCDFSPYDHLAVIALSQYCVELWNIDSRVKVAD) form a WD 1-6 repeat. The stretch at 880-910 (GHLSWVHGVMFSPDGSSFLTASDDQTIRVWE) is one WD 1-7 repeat. The interval 910–921 (ETRKVCKNSAIV) is interpropeller linker. Residues 922–958 (LKQEIDVVFQENEMMVLAVDNIRGLQLIAGKTGQIDY) form a WD 2-1 repeat. The stretch at 959 to 998 (LPEAQVSCCCLSPHLEYVAFGDEEGAIKIIELPNNRVFSS) is one WD 2-2 repeat. Residues 1001-1040 (GHKKAVRHIQFTADGKTLISSSEDSVIQVWNWQTEEYVFL) form a WD 2-3 repeat. Residues 1042-1080 (AHQETVKDFRLLRDSRLLSWSFDGTVKVWNVITGRIERD) form a WD 2-4 repeat. The stretch at 1083-1122 (CHQGTVLSCAISSDATKFSSTSADKTAKIWSFELPSPLHE) is one WD 2-5 repeat. The stretch at 1125–1164 (GHNSCVRCSAFSLDGILLATGDDNGEIRIWNVSDGQLLHL) is one WD 2-6 repeat. The stretch at 1176-1213 (THGGWVTDVCFSPDRKMLVSAGGYLKWWNVVTGESSQT) is one WD 2-7 repeat. Residues 1214 to 1249 (FYTNGTNLKKIHVSPDFRTYVTVDNLGILYILQVLE) form a WD 2-8 repeat.

Monomer. Oligomerizes to a heptameric ring, known as the apoptosome, upon binding of cytochrome c and dATP. Oligomeric Apaf-1 and pro-caspase-9 bind to each other via their respective NH2-terminal CARD domains. Interacts with UACA. Interacts with APIP. Interacts (via CARD and NACHT domains) with NAIP/BIRC1 (via NACHT domain). Interacts with CIAO2A.

It localises to the cytoplasm. Its function is as follows. Regulates programmed cell death; necessary for normal brain development. Participates with pro-caspase-9 (Apaf-3) in the cytochrome c-dependent activation of caspase-3, leading to apoptosis. This activation requires ATP. The sequence is that of Apoptotic protease-activating factor 1 (Apaf1) from Rattus norvegicus (Rat).